A 118-amino-acid chain; its full sequence is MRSAKLKFEKRRSRIRHKISKTSNRVRLSIFKSGRHIYAQIIDDSKSITIASASTLDKKIKKFKKSHCNIENAIKVGEEIAKKADSAGIKEVVFDRGGYKYHGVVKALADAAREKIKF.

It belongs to the universal ribosomal protein uL18 family. In terms of assembly, part of the 50S ribosomal subunit; part of the 5S rRNA/L5/L18/L25 subcomplex. Contacts the 5S and 23S rRNAs.

This is one of the proteins that bind and probably mediate the attachment of the 5S RNA into the large ribosomal subunit, where it forms part of the central protuberance. This Rickettsia felis (strain ATCC VR-1525 / URRWXCal2) (Rickettsia azadi) protein is Large ribosomal subunit protein uL18.